Here is a 31-residue protein sequence, read N- to C-terminus: Kappa-sparatoxin-Hv1c (31 aa).

Intrachain disulfides connect Cys-2-Cys-16, Cys-9-Cys-21, and Cys-15-Cys-25. Trp-31 is modified (tryptophan amide).

Expressed by the venom gland.

The protein localises to the secreted. Blocks transient outward voltage-gated potassium channels in rat ventricular myocytes (thus prolonging action-potential duration) and rat Kv4.2/KCNA4 channels expressed in Xenopus oocytes. Is also a weak blocker of calcium channels in rat cerebellar granule cells. The polypeptide is Kappa-sparatoxin-Hv1c (Heteropoda venatoria (Brown huntsman spider)).